The primary structure comprises 232 residues: 5'-methylthioadenosine/S-adenosylhomocysteine nucleosidase (232 aa).

Glutamate 12 functions as the Proton acceptor in the catalytic mechanism. Residues glycine 78, valine 152, and 173 to 174 (ME) contribute to the substrate site. The active-site Proton donor is aspartate 197.

Belongs to the PNP/UDP phosphorylase family. MtnN subfamily. Homodimer.

The catalysed reaction is S-adenosyl-L-homocysteine + H2O = S-(5-deoxy-D-ribos-5-yl)-L-homocysteine + adenine. It carries out the reaction S-methyl-5'-thioadenosine + H2O = 5-(methylsulfanyl)-D-ribose + adenine. It catalyses the reaction 5'-deoxyadenosine + H2O = 5-deoxy-D-ribose + adenine. The protein operates within amino-acid biosynthesis; L-methionine biosynthesis via salvage pathway; S-methyl-5-thio-alpha-D-ribose 1-phosphate from S-methyl-5'-thioadenosine (hydrolase route): step 1/2. Catalyzes the irreversible cleavage of the glycosidic bond in both 5'-methylthioadenosine (MTA) and S-adenosylhomocysteine (SAH/AdoHcy) to adenine and the corresponding thioribose, 5'-methylthioribose and S-ribosylhomocysteine, respectively. Also cleaves 5'-deoxyadenosine, a toxic by-product of radical S-adenosylmethionine (SAM) enzymes, into 5-deoxyribose and adenine. Thus, is required for in vivo function of the radical SAM enzymes biotin synthase and lipoic acid synthase, that are inhibited by 5'-deoxyadenosine accumulation. The chain is 5'-methylthioadenosine/S-adenosylhomocysteine nucleosidase from Buchnera aphidicola subsp. Acyrthosiphon pisum (strain APS) (Acyrthosiphon pisum symbiotic bacterium).